A 276-amino-acid polypeptide reads, in one-letter code: Probable endonuclease 4 (276 aa).

The Zn(2+) site is built by H66, H106, E141, D175, H178, H210, D223, H225, and E255.

It belongs to the AP endonuclease 2 family. Zn(2+) serves as cofactor.

It carries out the reaction Endonucleolytic cleavage to 5'-phosphooligonucleotide end-products.. Endonuclease IV plays a role in DNA repair. It cleaves phosphodiester bonds at apurinic or apyrimidinic (AP) sites, generating a 3'-hydroxyl group and a 5'-terminal sugar phosphate. This Heliobacterium modesticaldum (strain ATCC 51547 / Ice1) protein is Probable endonuclease 4.